Reading from the N-terminus, the 47-residue chain is Cytochrome b559 subunit beta (47 aa).

The chain crosses the membrane as a helical span at residues 22–38; it reads WLAVHTLAIPTVFFLGA. Residue His26 participates in heme binding.

This sequence belongs to the PsbE/PsbF family. As to quaternary structure, heterodimer of an alpha subunit and a beta subunit. PSII is composed of 1 copy each of membrane proteins PsbA, PsbB, PsbC, PsbD, PsbE, PsbF, PsbH, PsbI, PsbJ, PsbK, PsbL, PsbM, PsbT, PsbX, PsbY, PsbZ, Psb30/Ycf12, peripheral proteins PsbO, CyanoQ (PsbQ), PsbU, PsbV and a large number of cofactors. It forms dimeric complexes. It depends on heme b as a cofactor.

It localises to the cellular thylakoid membrane. In terms of biological role, this b-type cytochrome is tightly associated with the reaction center of photosystem II (PSII). PSII is a light-driven water:plastoquinone oxidoreductase that uses light energy to abstract electrons from H(2)O, generating O(2) and a proton gradient subsequently used for ATP formation. It consists of a core antenna complex that captures photons, and an electron transfer chain that converts photonic excitation into a charge separation. The polypeptide is Cytochrome b559 subunit beta (Synechococcus sp. (strain JA-3-3Ab) (Cyanobacteria bacterium Yellowstone A-Prime)).